Reading from the N-terminus, the 151-residue chain is Ribosome maturation factor RimP (151 aa).

It belongs to the RimP family.

The protein localises to the cytoplasm. In terms of biological role, required for maturation of 30S ribosomal subunits. The protein is Ribosome maturation factor RimP of Aliivibrio fischeri (strain MJ11) (Vibrio fischeri).